A 517-amino-acid chain; its full sequence is Glycerol kinase (517 aa).

T24 lines the ADP pocket. 3 residues coordinate ATP: T24, T25, and S26. Residue T24 participates in sn-glycerol 3-phosphate binding. R28 lines the ADP pocket. Positions 94, 95, 146, and 261 each coordinate sn-glycerol 3-phosphate. Positions 94, 95, 146, 261, and 262 each coordinate glycerol. Positions 283 and 327 each coordinate ADP. 4 residues coordinate ATP: T283, G327, Q331, and G428. G428 and N432 together coordinate ADP.

It belongs to the FGGY kinase family.

It catalyses the reaction glycerol + ATP = sn-glycerol 3-phosphate + ADP + H(+). Its pathway is polyol metabolism; glycerol degradation via glycerol kinase pathway; sn-glycerol 3-phosphate from glycerol: step 1/1. Its activity is regulated as follows. Inhibited by fructose 1,6-bisphosphate (FBP). Functionally, key enzyme in the regulation of glycerol uptake and metabolism. Catalyzes the phosphorylation of glycerol to yield sn-glycerol 3-phosphate. The sequence is that of Glycerol kinase from Mycobacterium tuberculosis (strain ATCC 25177 / H37Ra).